Here is a 424-residue protein sequence, read N- to C-terminus: Phosphomethylpyrimidine synthase 2 (424 aa).

Residues Asn-65, Met-94, Tyr-123, His-162, 184 to 186 (SRG), 225 to 228 (DGLR), and Glu-264 each bind substrate. Residue His-268 participates in Zn(2+) binding. Tyr-291 provides a ligand contact to substrate. His-332 contacts Zn(2+). [4Fe-4S] cluster-binding residues include Cys-408, Cys-411, and Cys-415.

Belongs to the ThiC family. [4Fe-4S] cluster serves as cofactor.

It carries out the reaction 5-amino-1-(5-phospho-beta-D-ribosyl)imidazole + S-adenosyl-L-methionine = 4-amino-2-methyl-5-(phosphooxymethyl)pyrimidine + CO + 5'-deoxyadenosine + formate + L-methionine + 3 H(+). It functions in the pathway cofactor biosynthesis; thiamine diphosphate biosynthesis. Its function is as follows. Catalyzes the synthesis of the hydroxymethylpyrimidine phosphate (HMP-P) moiety of thiamine from aminoimidazole ribotide (AIR) in a radical S-adenosyl-L-methionine (SAM)-dependent reaction. The sequence is that of Phosphomethylpyrimidine synthase 2 from Methanothermobacter thermautotrophicus (strain ATCC 29096 / DSM 1053 / JCM 10044 / NBRC 100330 / Delta H) (Methanobacterium thermoautotrophicum).